Here is a 411-residue protein sequence, read N- to C-terminus: MNPIQSFHCKLRGLATTLDSETARLLRALDGEDSDFEDSPGRILHDLHSEVQTLKDNVNALLDEARLENQESTRFKKATKILMEKNSADVRKLREFFQKYGYQARDKEDSGCEHRVNNSTPELAVCKDIQKAGVKELSDPCVPSGSVSEEPLRSPQLSDFGLQRYIISQVPANPPQTAASLKEERVAETPPAKDPSVQVLKTPRCALRMDDFECETPKLEHFGISEHTMCLNEDYTMGLKNMKNIKSSLLSGVSGEAIGTGPVTSDNSFAIPGPIIQQMEENDVEYVSSPLPPKFCTPGLKIPSTMDRTDLVSIDYPLSKPNSSSTDLEIKDCVPLILNSDECYQSFAEPPSSAITSCENFATPSPPKVTAIPEDILQMITKHSSNLASPLDVKVMPRRKGTRGAANKENW.

A phosphoserine mark is found at serine 34, serine 119, serine 138, serine 154, and serine 158. The segment at 102–410 (YQARDKEDSG…GTRGAANKEN (309 aa)) is binds the NDC80 complex. Phosphothreonine is present on residues threonine 189 and threonine 216. A binds microtubules and contacts the microtubule-binding domain of SKA1 region spans residues 195–410 (PSVQVLKTPR…GTRGAANKEN (216 aa)). Serine 289 carries the phosphoserine modification. Threonine 297 bears the Phosphothreonine mark. Residues serine 324 and serine 352 each carry the phosphoserine modification. The segment at 349 to 410 (EPPSSAITSC…GTRGAANKEN (62 aa)) is required for localization to kinetochores. The residue at position 363 (threonine 363) is a Phosphothreonine.

Belongs to the SKA3 family. In terms of assembly, component of the SKA complex, composed of SKA1, SKA2 and SKA3. The SKA complex is a homodimer organized around a central W-shaped coiled-coil structure, formed by the interacting domains of SKA1, SKA2, and SKA3, each end of the 'W' is extended further by the C-terminal microtubule-binding domains of SKA1 and SKA3; the complex forms extended structures on microtubules. Interacts with the NDC80-NUF2 heterodimer of the NDC80 complex (via coiled coils); the interaction localizes the SKA complex to the kinetochore and is required to establish kinetochore-microtubule end-on attachments. Interacts with polo-like kinase PLK1.

Its subcellular location is the cytoplasm. It is found in the cytoskeleton. The protein localises to the spindle. The protein resides in the chromosome. It localises to the centromere. Its subcellular location is the kinetochore. It is found in the microtubule organizing center. The protein localises to the centrosome. Its function is as follows. Component of the SKA complex, a microtubule plus end-binding complex of the outer kinetochore that stabilizes spindle microtubule-kinetochore attachments, promotes alignment of chromosomes at the mitotic spindle equator (chromosome congression) and assists suppression of the spindle assembly checkpoint. Kinetochores, consisting of a centromere-associated inner segment and a microtubule-contacting outer segment, play a crucial role in chromosome segregation by mediating the physical connection between centromeric DNA and spindle microtubules. The outer kinetochore is made up of the ten-subunit KMN network complex, comprising the MIS12, NDC80 and KNL1 complexes, and auxiliary microtubule-associated components such as the SKA complex; together they connect the outer kinetochore with the inner kinetochore, bind microtubules, and mediate interactions with mitotic checkpoint proteins that delay anaphase until chromosomes are bioriented on the spindle. The SKA complex is loaded onto bioriented kinetochores and it facilitates chromosome congression by stabilizing microtubules together with MAPRE1, and end-on attachment of the NDC80 complex to depolymerizing spindle microtubules, thereby assisting the poleward-moving kinetochore in withstanding microtubule pulling forces. The complex associates with dynamic microtubule plus-ends and can track both depolymerizing and elongating microtubules. The complex recruits protein phosphatase 1 (PP1) to the kinetochore in prometaphase and metaphase, to oppose spindle assembly checkpoint signaling and promote the onset of anaphase. Within the complex, binds microtubules but with a much lower affinity than SKA1. Promotes stability of the polo-like kinase PLK1 protein. During meiosis the SKA complex stabilizes the meiotic spindle and is required for its migration to the cortex. In Mus musculus (Mouse), this protein is SKA complex subunit 3 (Ska3).